A 185-amino-acid polypeptide reads, in one-letter code: Ribonuclease M5 1 (185 aa).

The region spanning 4–87 (KEVIVVEGKD…AFLTKHDAAP (84 aa)) is the Toprim domain. Residues Glu10, Asp56, and Asp58 each coordinate Mg(2+).

Belongs to the ribonuclease M5 family. It depends on Mg(2+) as a cofactor.

It is found in the cytoplasm. The catalysed reaction is Endonucleolytic cleavage of RNA, removing 21 and 42 nucleotides, respectively, from the 5'- and 3'-termini of a 5S-rRNA precursor.. Required for correct processing of both the 5' and 3' ends of 5S rRNA precursor. Cleaves both sides of a double-stranded region yielding mature 5S rRNA in one step. The chain is Ribonuclease M5 1 from Ligilactobacillus salivarius (strain UCC118) (Lactobacillus salivarius).